We begin with the raw amino-acid sequence, 434 residues long: Protein HEAT INTOLERANT 4 (434 aa).

Positions 1–8 (MKKGAKRK) match the Nuclear localization signal 1 motif. The span at 1-15 (MKKGAKRKGVSKAGR) shows a compositional bias: basic residues. The interval 1 to 131 (MKKGAKRKGV…PVPKAKKPRA (131 aa)) is disordered. Residues 30–53 (ETTKTTQEESQQHEEEVVDEVKEN) show a composition bias toward basic and acidic residues. Acidic residues predominate over residues 54 to 82 (GEEEEAKGDQEEEEDAKPDSLEEDEENQE). Basic and acidic residues predominate over residues 83 to 98 (DEVKAEEVKEEVEKKP). A Nuclear localization signal 2 motif is present at residues 95-102 (EKKPVARR). Residues 99 to 110 (VARRGGKRKRAT) are compositionally biased toward basic residues. The span at 111 to 122 (KKDTEIKDEKKP) shows a compositional bias: basic and acidic residues. Positions 363–394 (VKEQVRAAKKANREAKDARKKAIEEMSEDTKQ) form a coiled coil. The Nuclear localization signal 3 motif lies at 370–377 (AKKANREA).

The protein resides in the nucleus. The protein localises to the nucleolus. Functionally, essential protein required for basal thermotolerance, especially during heat-induced chromocentre decondensation, thus regulating transcriptional gene silencing (TGS). This chain is Protein HEAT INTOLERANT 4, found in Arabidopsis thaliana (Mouse-ear cress).